The primary structure comprises 229 residues: NAD(P)H-hydrate epimerase (229 aa).

The region spanning 10–224 is the YjeF N-terminal domain; it reads SREVDQIAIE…DIGIPPALLD (215 aa). 57 to 61 is a (6S)-NADPHX binding site; it reads NNGGD. K(+) contacts are provided by Asn-58 and Asp-129. Residues 133-139 and Asp-167 each bind (6S)-NADPHX; that span reads GTGIRGQ. Residue Ser-170 participates in K(+) binding.

The protein belongs to the NnrE/AIBP family. K(+) is required as a cofactor.

The enzyme catalyses (6R)-NADHX = (6S)-NADHX. It catalyses the reaction (6R)-NADPHX = (6S)-NADPHX. Catalyzes the epimerization of the S- and R-forms of NAD(P)HX, a damaged form of NAD(P)H that is a result of enzymatic or heat-dependent hydration. This is a prerequisite for the S-specific NAD(P)H-hydrate dehydratase to allow the repair of both epimers of NAD(P)HX. This is NAD(P)H-hydrate epimerase from Rubinisphaera brasiliensis (strain ATCC 49424 / DSM 5305 / JCM 21570 / IAM 15109 / NBRC 103401 / IFAM 1448) (Planctomyces brasiliensis).